The following is a 288-amino-acid chain: Aquaporin NIP2-1 (288 aa).

M1 is subject to N-acetylmethionine. A run of 2 helical transmembrane segments spans residues 50 to 70 (LLAELVGTYYLIFAGCAAIAV) and 77 to 97 (VVTLVGIAVVWGIVIMVLVYC). The NPA 1 motif lies at 106–108 (NPA). 3 helical membrane passes run 126 to 146 (AYITVQVIGSTLASATLRLLF), 170 to 190 (LQAFVMEFIITGFLMLVVCAV), and 202 to 222 (GLIIGATVTLNVIFAGEVSGA). Positions 225-227 (NPA) match the NPA 2 motif. Residues 234–254 (LVWGCYKGIWIYLLAPTLGAV) form a helical membrane-spanning segment. At S278 the chain carries Phosphoserine.

The protein belongs to the MIP/aquaporin (TC 1.A.8) family. NIP (TC 1.A.8.12) subfamily. In terms of tissue distribution, specifically expressed in roots with high expression in root elongation zone and root stele.

Its subcellular location is the endoplasmic reticulum membrane. Its function is as follows. Low water transport activity in yeast cells. This chain is Aquaporin NIP2-1 (NIP2-1), found in Arabidopsis thaliana (Mouse-ear cress).